A 315-amino-acid polypeptide reads, in one-letter code: 4-hydroxy-3-methylbut-2-enyl diphosphate reductase (315 aa).

Cysteine 12 serves as a coordination point for [4Fe-4S] cluster. (2E)-4-hydroxy-3-methylbut-2-enyl diphosphate is bound by residues histidine 41 and histidine 74. Dimethylallyl diphosphate-binding residues include histidine 41 and histidine 74. Isopentenyl diphosphate is bound by residues histidine 41 and histidine 74. Residue cysteine 96 participates in [4Fe-4S] cluster binding. A (2E)-4-hydroxy-3-methylbut-2-enyl diphosphate-binding site is contributed by histidine 124. Histidine 124 contributes to the dimethylallyl diphosphate binding site. Position 124 (histidine 124) interacts with isopentenyl diphosphate. Residue glutamate 126 is the Proton donor of the active site. (2E)-4-hydroxy-3-methylbut-2-enyl diphosphate is bound at residue threonine 168. Cysteine 198 contributes to the [4Fe-4S] cluster binding site. 4 residues coordinate (2E)-4-hydroxy-3-methylbut-2-enyl diphosphate: serine 226, serine 227, asparagine 228, and serine 270. 4 residues coordinate dimethylallyl diphosphate: serine 226, serine 227, asparagine 228, and serine 270. Residues serine 226, serine 227, asparagine 228, and serine 270 each coordinate isopentenyl diphosphate.

It belongs to the IspH family. [4Fe-4S] cluster is required as a cofactor.

It carries out the reaction isopentenyl diphosphate + 2 oxidized [2Fe-2S]-[ferredoxin] + H2O = (2E)-4-hydroxy-3-methylbut-2-enyl diphosphate + 2 reduced [2Fe-2S]-[ferredoxin] + 2 H(+). The catalysed reaction is dimethylallyl diphosphate + 2 oxidized [2Fe-2S]-[ferredoxin] + H2O = (2E)-4-hydroxy-3-methylbut-2-enyl diphosphate + 2 reduced [2Fe-2S]-[ferredoxin] + 2 H(+). The protein operates within isoprenoid biosynthesis; dimethylallyl diphosphate biosynthesis; dimethylallyl diphosphate from (2E)-4-hydroxy-3-methylbutenyl diphosphate: step 1/1. Its pathway is isoprenoid biosynthesis; isopentenyl diphosphate biosynthesis via DXP pathway; isopentenyl diphosphate from 1-deoxy-D-xylulose 5-phosphate: step 6/6. In terms of biological role, catalyzes the conversion of 1-hydroxy-2-methyl-2-(E)-butenyl 4-diphosphate (HMBPP) into a mixture of isopentenyl diphosphate (IPP) and dimethylallyl diphosphate (DMAPP). Acts in the terminal step of the DOXP/MEP pathway for isoprenoid precursor biosynthesis. The sequence is that of 4-hydroxy-3-methylbut-2-enyl diphosphate reductase from Pseudomonas putida (strain GB-1).